The following is a 150-amino-acid chain: SsrA-binding protein (150 aa).

Belongs to the SmpB family.

The protein localises to the cytoplasm. In terms of biological role, required for rescue of stalled ribosomes mediated by trans-translation. Binds to transfer-messenger RNA (tmRNA), required for stable association of tmRNA with ribosomes. tmRNA and SmpB together mimic tRNA shape, replacing the anticodon stem-loop with SmpB. tmRNA is encoded by the ssrA gene; the 2 termini fold to resemble tRNA(Ala) and it encodes a 'tag peptide', a short internal open reading frame. During trans-translation Ala-aminoacylated tmRNA acts like a tRNA, entering the A-site of stalled ribosomes, displacing the stalled mRNA. The ribosome then switches to translate the ORF on the tmRNA; the nascent peptide is terminated with the 'tag peptide' encoded by the tmRNA and targeted for degradation. The ribosome is freed to recommence translation, which seems to be the essential function of trans-translation. This is SsrA-binding protein from Chlamydia caviae (strain ATCC VR-813 / DSM 19441 / 03DC25 / GPIC) (Chlamydophila caviae).